Reading from the N-terminus, the 312-residue chain is Glyoxylate/hydroxypyruvate reductase A (312 aa).

Residue arginine 227 is part of the active site. Histidine 275 (proton donor) is an active-site residue.

The protein belongs to the D-isomer specific 2-hydroxyacid dehydrogenase family. GhrA subfamily.

It is found in the cytoplasm. It catalyses the reaction glycolate + NADP(+) = glyoxylate + NADPH + H(+). The enzyme catalyses (R)-glycerate + NAD(+) = 3-hydroxypyruvate + NADH + H(+). It carries out the reaction (R)-glycerate + NADP(+) = 3-hydroxypyruvate + NADPH + H(+). Its function is as follows. Catalyzes the NADPH-dependent reduction of glyoxylate and hydroxypyruvate into glycolate and glycerate, respectively. In Escherichia coli O81 (strain ED1a), this protein is Glyoxylate/hydroxypyruvate reductase A.